The primary structure comprises 543 residues: uncharacterized protein (543 aa).

A PE domain is found at 1-93; the sequence is MSFVTAAPEM…GGAYSSAEAA (93 aa). A disordered region spans residues 194-214; that stretch reads GGAGGPGGPTDVPAGTGGAGG.

Belongs to the mycobacterial PE family. PGRS subfamily.

This is an uncharacterized protein from Mycobacterium tuberculosis (strain CDC 1551 / Oshkosh).